A 267-amino-acid polypeptide reads, in one-letter code: tRNA pseudouridine synthase A (267 aa).

The Nucleophile role is filled by Asp-51. Residue Tyr-109 coordinates substrate.

It belongs to the tRNA pseudouridine synthase TruA family. In terms of assembly, homodimer.

It carries out the reaction uridine(38/39/40) in tRNA = pseudouridine(38/39/40) in tRNA. Formation of pseudouridine at positions 38, 39 and 40 in the anticodon stem and loop of transfer RNAs. The chain is tRNA pseudouridine synthase A from Staphylococcus aureus (strain bovine RF122 / ET3-1).